The primary structure comprises 704 residues: Phosphate acetyltransferase (704 aa).

A phosphate acetyltransferase region spans residues 380-704 (FNLIEKAKRN…IQAQAEKGLI (325 aa)).

It in the N-terminal section; belongs to the CobB/CobQ family. In the C-terminal section; belongs to the phosphate acetyltransferase and butyryltransferase family. Homohexamer.

It is found in the cytoplasm. It carries out the reaction acetyl-CoA + phosphate = acetyl phosphate + CoA. It participates in metabolic intermediate biosynthesis; acetyl-CoA biosynthesis; acetyl-CoA from acetate: step 2/2. Involved in acetate metabolism. The chain is Phosphate acetyltransferase (pta) from Nitratidesulfovibrio vulgaris (strain ATCC 29579 / DSM 644 / CCUG 34227 / NCIMB 8303 / VKM B-1760 / Hildenborough) (Desulfovibrio vulgaris).